Reading from the N-terminus, the 723-residue chain is 1,3-beta-galactosyl-N-acetylhexosamine phosphorylase Cphy0577 (723 aa).

The active-site Proton donor is the D317.

This sequence belongs to the glycoside hydrolase 112 family.

The enzyme catalyses beta-D-galactosyl-(1-&gt;3)-N-acetyl-D-glucosamine + phosphate = alpha-D-galactose 1-phosphate + N-acetyl-D-glucosamine. Its function is as follows. Reversibly phosphorolyzes beta-D-galactopyranosyl-(1-&gt;3)-N-acetyl-D-glucosamine to form alpha-D-galactopyranose 1-phosphate and acetyl-D-glucosamine. Active towards galacto-N-biose and lacto-N-biose. Does not phosphorolyze galacto-N-tetraose or lacto-N-tetraose. In the reverse reaction has activity toward N-acetyl-D-glucosamine and N-acetyl-D-galactosamine, but not L-rhamnose, D-glucose or D-galactose. The polypeptide is 1,3-beta-galactosyl-N-acetylhexosamine phosphorylase Cphy0577 (Lachnoclostridium phytofermentans (strain ATCC 700394 / DSM 18823 / ISDg) (Clostridium phytofermentans)).